Consider the following 425-residue polypeptide: Cell adhesion molecule CEACAM16 (425 aa).

The signal sequence occupies residues 1 to 20 (MALTGYSWLLLSATFLNVGA). An N-linked (GlcNAc...) asparagine glycan is attached at Asn-36. 2 consecutive Ig-like C2-type domains span residues 133-218 (PTVL…INLT) and 223-309 (PERV…ASVV). The cysteines at positions 153 and 201 are disulfide-linked. N-linked (GlcNAc...) asparagine glycosylation is present at Asn-216. Cysteines 252 and 293 form a disulfide. A glycan (N-linked (GlcNAc...) asparagine) is linked at Asn-394.

This sequence belongs to the immunoglobulin superfamily. CEA family. In terms of assembly, homooligomer; can for homodimers and homotetramers. Interacts with TECTA and TECTB.

Its subcellular location is the secreted. In terms of biological role, required for proper hearing, plays a role in maintaining the integrity of the tectorial membrane. The chain is Cell adhesion molecule CEACAM16 from Homo sapiens (Human).